Here is a 205-residue protein sequence, read N- to C-terminus: Large ribosomal subunit protein uL4 (205 aa).

The interval 43–78 (ARAGTKAQKTRSEVAGGGKKPWRQKGTGNARAGTIR) is disordered.

It belongs to the universal ribosomal protein uL4 family. Part of the 50S ribosomal subunit.

Its function is as follows. One of the primary rRNA binding proteins, this protein initially binds near the 5'-end of the 23S rRNA. It is important during the early stages of 50S assembly. It makes multiple contacts with different domains of the 23S rRNA in the assembled 50S subunit and ribosome. Functionally, forms part of the polypeptide exit tunnel. This chain is Large ribosomal subunit protein uL4, found in Halorhodospira halophila (strain DSM 244 / SL1) (Ectothiorhodospira halophila (strain DSM 244 / SL1)).